Consider the following 460-residue polypeptide: Bifunctional protein GlmU (460 aa).

Positions 1 to 232 (MALNVVILAA…AIEVEGANNR (232 aa)) are pyrophosphorylase. Residues 8-11 (LAAG), Lys22, Gln73, 78-79 (GT), 100-102 (YGD), Gly137, Glu157, Asn172, and Asn230 contribute to the UDP-N-acetyl-alpha-D-glucosamine site. Residue Asp102 coordinates Mg(2+). Asn230 serves as a coordination point for Mg(2+). The segment at 233–253 (VQLAQLERAYQAREAEKLMLA) is linker. The segment at 254–460 (GANLRDPSRI…GWQRPVKIKK (207 aa)) is N-acetyltransferase. Arg336 and Lys354 together coordinate UDP-N-acetyl-alpha-D-glucosamine. Catalysis depends on His366, which acts as the Proton acceptor. Residues Tyr369 and Asn380 each contribute to the UDP-N-acetyl-alpha-D-glucosamine site. Acetyl-CoA is bound by residues Ala383, 389-390 (NY), Ser408, Ala426, and Arg443.

In the N-terminal section; belongs to the N-acetylglucosamine-1-phosphate uridyltransferase family. The protein in the C-terminal section; belongs to the transferase hexapeptide repeat family. Homotrimer. The cofactor is Mg(2+).

Its subcellular location is the cytoplasm. The enzyme catalyses alpha-D-glucosamine 1-phosphate + acetyl-CoA = N-acetyl-alpha-D-glucosamine 1-phosphate + CoA + H(+). It catalyses the reaction N-acetyl-alpha-D-glucosamine 1-phosphate + UTP + H(+) = UDP-N-acetyl-alpha-D-glucosamine + diphosphate. It participates in nucleotide-sugar biosynthesis; UDP-N-acetyl-alpha-D-glucosamine biosynthesis; N-acetyl-alpha-D-glucosamine 1-phosphate from alpha-D-glucosamine 6-phosphate (route II): step 2/2. It functions in the pathway nucleotide-sugar biosynthesis; UDP-N-acetyl-alpha-D-glucosamine biosynthesis; UDP-N-acetyl-alpha-D-glucosamine from N-acetyl-alpha-D-glucosamine 1-phosphate: step 1/1. The protein operates within bacterial outer membrane biogenesis; LPS lipid A biosynthesis. Functionally, catalyzes the last two sequential reactions in the de novo biosynthetic pathway for UDP-N-acetylglucosamine (UDP-GlcNAc). The C-terminal domain catalyzes the transfer of acetyl group from acetyl coenzyme A to glucosamine-1-phosphate (GlcN-1-P) to produce N-acetylglucosamine-1-phosphate (GlcNAc-1-P), which is converted into UDP-GlcNAc by the transfer of uridine 5-monophosphate (from uridine 5-triphosphate), a reaction catalyzed by the N-terminal domain. In Shewanella baltica (strain OS185), this protein is Bifunctional protein GlmU.